A 726-amino-acid chain; its full sequence is Peroxisomal bifunctional enzyme (726 aa).

An enoyl-CoA hydratase / isomerase region spans residues 1–284 (MAEYLRLPHS…FAERSAPKWS (284 aa)). Position 38 is an N6-succinyllysine (Lys-38). Gly-103 provides a ligand contact to substrate. Lys-167 bears the N6-acetyllysine; alternate mark. Position 167 is an N6-succinyllysine; alternate (Lys-167). Position 173 is an N6-acetyllysine (Lys-173). An N6-succinyllysine modification is found at Lys-185. The residue at position 221 (Lys-221) is an N6-acetyllysine; alternate. An N6-succinyllysine; alternate modification is found at Lys-221. 3 positions are modified to N6-succinyllysine: Lys-282, Lys-292, and Lys-333. The 3-hydroxyacyl-CoA dehydrogenase stretch occupies residues 285–575 (TPSGASWKTA…DMLCELGRFG (291 aa)). Lys-348 and Lys-352 each carry N6-acetyllysine. Residues 352–371 (KSRQQCGQQRSGPKPRFSSS) form a disordered region. Polar residues predominate over residues 353-371 (SRQQCGQQRSGPKPRFSSS). Position 467 is an N6-acetyllysine (Lys-467). Lys-535 carries the post-translational modification N6-succinyllysine. Lys-587, Lys-594, and Lys-713 each carry N6-acetyllysine; alternate. An N6-succinyllysine; alternate mark is found at Lys-587, Lys-594, and Lys-713. The Microbody targeting signal motif lies at 724-726 (SKL). At Lys-725 the chain carries N6-succinyllysine.

It in the N-terminal section; belongs to the enoyl-CoA hydratase/isomerase family. The protein in the C-terminal section; belongs to the 3-hydroxyacyl-CoA dehydrogenase family. In terms of assembly, monomer. Post-translationally, acetylated, leading to enhanced enzyme activity. Acetylation is enhanced by up to 80% after treatment either with trichostin A (TSA) or with nicotinamide (NAM) with highest increase on Lys-348. Acetylation and enzyme activity increased by about 1.5% on addition of fatty acids.

It is found in the peroxisome. It carries out the reaction a (3S)-3-hydroxyacyl-CoA = a (2E)-enoyl-CoA + H2O. The catalysed reaction is a 4-saturated-(3S)-3-hydroxyacyl-CoA = a (3E)-enoyl-CoA + H2O. The enzyme catalyses a (3Z)-enoyl-CoA = a 4-saturated (2E)-enoyl-CoA. It catalyses the reaction a (3E)-enoyl-CoA = a 4-saturated (2E)-enoyl-CoA. It carries out the reaction a (3S)-3-hydroxyacyl-CoA + NAD(+) = a 3-oxoacyl-CoA + NADH + H(+). The catalysed reaction is (2S,3S)-3-hydroxy-2-methylbutanoyl-CoA = (2E)-2-methylbut-2-enoyl-CoA + H2O. The enzyme catalyses (3S)-hydroxyhexadecanoyl-CoA + NAD(+) = 3-oxohexadecanoyl-CoA + NADH + H(+). It catalyses the reaction (3S)-hydroxyhexadecanoyl-CoA = (2E)-hexadecenoyl-CoA + H2O. It carries out the reaction (2E)-hexadecenedioyl-CoA + H2O = (3S)-hydroxyhexadecanedioyl-CoA. The catalysed reaction is (3S)-hydroxyhexadecanedioyl-CoA + NAD(+) = 3-oxohexadecanedioyl-CoA + NADH + H(+). The enzyme catalyses (3E,5Z)-tetradecadienoyl-CoA = (2E,5Z)-tetradecadienoyl-CoA. It catalyses the reaction (3E,5Z)-octadienoyl-CoA = (2E,5Z)-octadienoyl-CoA. It carries out the reaction (3S)-hydroxydecanoyl-CoA + NAD(+) = 3-oxodecanoyl-CoA + NADH + H(+). The catalysed reaction is (3E)-decenoyl-CoA = (2E)-decenoyl-CoA. The enzyme catalyses (3Z)-hexenoyl-CoA = (2E)-hexenoyl-CoA. It catalyses the reaction (3E)-hexenoyl-CoA = (2E)-hexenoyl-CoA. It carries out the reaction (3S)-hydroxydecanoyl-CoA = (2E)-decenoyl-CoA + H2O. The catalysed reaction is (3S)-hydroxyhexanoyl-CoA = (2E)-hexenoyl-CoA + H2O. The protein operates within lipid metabolism; fatty acid beta-oxidation. Enzyme activity enhanced by acetylation. Functionally, peroxisomal trifunctional enzyme possessing 2-enoyl-CoA hydratase, 3-hydroxyacyl-CoA dehydrogenase, and delta 3, delta 2-enoyl-CoA isomerase activities. Catalyzes two of the four reactions of the long chain fatty acids peroxisomal beta-oxidation pathway. Can also use branched-chain fatty acids such as 2-methyl-2E-butenoyl-CoA as a substrate, which is hydrated into (2S,3S)-3-hydroxy-2-methylbutanoyl-CoA. Optimal isomerase for 2,5 double bonds into 3,5 form isomerization in a range of enoyl-CoA species. Also able to isomerize both 3-cis and 3-trans double bonds into the 2-trans form in a range of enoyl-CoA species. Regulates the amount of medium-chain dicarboxylic fatty acids which are essential regulators of all fatty acid oxidation pathways. Also involved in the degradation of long-chain dicarboxylic acids through peroxisomal beta-oxidation. The sequence is that of Peroxisomal bifunctional enzyme (EHHADH) from Cavia porcellus (Guinea pig).